Reading from the N-terminus, the 121-residue chain is Fluoride-specific ion channel FluC 2 (121 aa).

The next 4 membrane-spanning stretches (helical) occupy residues 3–23 (YLFV…LSTL), 27–47 (SGLP…MGYL), 64–84 (GVTT…FELV), and 92–112 (IALL…FCWF). Positions 71 and 74 each coordinate Na(+).

It belongs to the fluoride channel Fluc/FEX (TC 1.A.43) family.

It localises to the cell membrane. The enzyme catalyses fluoride(in) = fluoride(out). Na(+) is not transported, but it plays an essential structural role and its presence is essential for fluoride channel function. In terms of biological role, fluoride-specific ion channel. Important for reducing fluoride concentration in the cell, thus reducing its toxicity. The chain is Fluoride-specific ion channel FluC 2 from Staphylococcus haemolyticus (strain JCSC1435).